The sequence spans 553 residues: Hydroxylamine reductase (553 aa).

4 residues coordinate [4Fe-4S] cluster: Cys-3, Cys-6, Cys-15, and Cys-21. The hybrid [4Fe-2O-2S] cluster site is built by His-244, Glu-268, Cys-312, Cys-406, Cys-434, Cys-459, Glu-494, and Lys-496. Cys-406 carries the cysteine persulfide modification.

The protein belongs to the HCP family. As to quaternary structure, monomer. The cofactor is [4Fe-4S] cluster. It depends on hybrid [4Fe-2O-2S] cluster as a cofactor.

It is found in the cytoplasm. It catalyses the reaction A + NH4(+) + H2O = hydroxylamine + AH2 + H(+). In terms of biological role, catalyzes the reduction of hydroxylamine to form NH(3) and H(2)O. The polypeptide is Hydroxylamine reductase (Nitratidesulfovibrio vulgaris (strain ATCC 29579 / DSM 644 / CCUG 34227 / NCIMB 8303 / VKM B-1760 / Hildenborough) (Desulfovibrio vulgaris)).